Consider the following 157-residue polypeptide: Phosphopantetheine adenylyltransferase (157 aa).

Thr-10 contributes to the substrate binding site. ATP contacts are provided by residues 10 to 11 (TF) and His-18. 3 residues coordinate substrate: Lys-42, Leu-74, and Arg-88. ATP-binding positions include 89–91 (GLR), Glu-99, and 124–130 (NAFISSS).

Belongs to the bacterial CoaD family. As to quaternary structure, homohexamer. It depends on Mg(2+) as a cofactor.

It localises to the cytoplasm. It catalyses the reaction (R)-4'-phosphopantetheine + ATP + H(+) = 3'-dephospho-CoA + diphosphate. The protein operates within cofactor biosynthesis; coenzyme A biosynthesis; CoA from (R)-pantothenate: step 4/5. Functionally, reversibly transfers an adenylyl group from ATP to 4'-phosphopantetheine, yielding dephospho-CoA (dPCoA) and pyrophosphate. This Helicobacter pylori (strain P12) protein is Phosphopantetheine adenylyltransferase.